Consider the following 176-residue polypeptide: Glutathione-regulated potassium-efflux system ancillary protein KefF (176 aa).

FMN contacts are provided by residues histidine 8, 14–17 (SHAN), 65–68 (MQWY), and 105–108 (TTGG).

It belongs to the NAD(P)H dehydrogenase (quinone) family. KefF subfamily. Homodimer. Interacts with KefC. Requires FMN as cofactor.

The protein resides in the cell inner membrane. The enzyme catalyses a quinone + NADH + H(+) = a quinol + NAD(+). It catalyses the reaction a quinone + NADPH + H(+) = a quinol + NADP(+). In terms of biological role, regulatory subunit of a potassium efflux system that confers protection against electrophiles. Required for full activity of KefC. Shows redox enzymatic activity, but this enzymatic activity is not required for activation of KefC. This chain is Glutathione-regulated potassium-efflux system ancillary protein KefF, found in Salmonella gallinarum (strain 287/91 / NCTC 13346).